The sequence spans 110 residues: Large ribosomal subunit protein uL22 (110 aa).

This sequence belongs to the universal ribosomal protein uL22 family. In terms of assembly, part of the 50S ribosomal subunit.

Functionally, this protein binds specifically to 23S rRNA; its binding is stimulated by other ribosomal proteins, e.g. L4, L17, and L20. It is important during the early stages of 50S assembly. It makes multiple contacts with different domains of the 23S rRNA in the assembled 50S subunit and ribosome. Its function is as follows. The globular domain of the protein is located near the polypeptide exit tunnel on the outside of the subunit, while an extended beta-hairpin is found that lines the wall of the exit tunnel in the center of the 70S ribosome. In Salmonella arizonae (strain ATCC BAA-731 / CDC346-86 / RSK2980), this protein is Large ribosomal subunit protein uL22.